The following is a 338-amino-acid chain: Lipoate-protein ligase A (338 aa).

Residues 29–216 (DPNQRVLFLW…AFFAHYGARV (188 aa)) enclose the BPL/LPL catalytic domain. ATP contacts are provided by residues R71, 76 to 79 (GAVF), and K134. Residue K134 coordinates (R)-lipoate.

It belongs to the LplA family. Monomer.

The protein localises to the cytoplasm. The enzyme catalyses L-lysyl-[lipoyl-carrier protein] + (R)-lipoate + ATP = N(6)-[(R)-lipoyl]-L-lysyl-[lipoyl-carrier protein] + AMP + diphosphate + H(+). It participates in protein modification; protein lipoylation via exogenous pathway; protein N(6)-(lipoyl)lysine from lipoate: step 1/2. The protein operates within protein modification; protein lipoylation via exogenous pathway; protein N(6)-(lipoyl)lysine from lipoate: step 2/2. Functionally, catalyzes both the ATP-dependent activation of exogenously supplied lipoate to lipoyl-AMP and the transfer of the activated lipoyl onto the lipoyl domains of lipoate-dependent enzymes. The sequence is that of Lipoate-protein ligase A from Aeromonas salmonicida (strain A449).